Here is an 86-residue protein sequence, read N- to C-terminus: Exodeoxyribonuclease 7 small subunit (86 aa).

Positions 1–27 (MQDELFETEKIPPKNTKNAKNAPKKSF) are disordered.

It belongs to the XseB family. As to quaternary structure, heterooligomer composed of large and small subunits.

Its subcellular location is the cytoplasm. It catalyses the reaction Exonucleolytic cleavage in either 5'- to 3'- or 3'- to 5'-direction to yield nucleoside 5'-phosphates.. Functionally, bidirectionally degrades single-stranded DNA into large acid-insoluble oligonucleotides, which are then degraded further into small acid-soluble oligonucleotides. This chain is Exodeoxyribonuclease 7 small subunit, found in Helicobacter pylori (strain G27).